Consider the following 162-residue polypeptide: Autophagy-related protein 8 (162 aa).

Basic and acidic residues predominate over residues 1–27 (MRSKFKDEHPFEKRKAEAERIRQKYSD). Residues 1-42 (MRSKFKDEHPFEKRKAEAERIRQKYSDRIPPSPHSPASRLIG) are disordered. Gly157 is lipidated: Phosphatidylethanolamine amidated glycine. Positions 158–162 (GFETA) are cleaved as a propeptide — removed in mature form.

This sequence belongs to the ATG8 family.

It is found in the cytoplasmic vesicle. The protein localises to the autophagosome membrane. It localises to the vacuole membrane. In terms of biological role, ubiquitin-like modifier involved in autophagosome formation. With ATG4, mediates the delivery of the autophagosomes to the vacuole via the microtubule cytoskeleton. Required for selective autophagic degradation of the nucleus (nucleophagy) as well as for mitophagy which contributes to regulate mitochondrial quantity and quality by eliminating the mitochondria to a basal level to fulfill cellular energy requirements and preventing excess ROS production. Also participates in membrane fusion events that take place in the early secretory pathway. Also involved in endoplasmic reticulum-specific autophagic process and is essential for the survival of cells subjected to severe ER stress. The ATG8-PE conjugate mediates tethering between adjacent membranes and stimulates membrane hemifusion, leading to expansion of the autophagosomal membrane during autophagy. The sequence is that of Autophagy-related protein 8 from Colletotrichum higginsianum (strain IMI 349063) (Crucifer anthracnose fungus).